A 530-amino-acid chain; its full sequence is Carbohydrate sulfotransferase 2 (530 aa).

At 1-54 (MSRSPQRALPPGALPRLLQAAPAAAPRALLPQWPRRPGRRWPASPLGMKVFRRK) the chain is on the cytoplasmic side. The chain crosses the membrane as a helical; Signal-anchor for type II membrane protein span at residues 55–75 (ALVLCAGYALLLVLTMLNLLD). Topologically, residues 76-530 (YKWHKEPLQQ…SKTLLRKPRL (455 aa)) are lumenal. The interval 89 to 119 (DGPLGAAAGAAGGSWGRPGPPPAGPPRAHAR) is disordered. 173-179 (WRSGSSF) lines the 3'-phosphoadenylyl sulfate pocket. A glycan (N-linked (GlcNAc...) asparagine) is linked at Asn243. 332–340 (RDPRAVASS) serves as a coordination point for 3'-phosphoadenylyl sulfate. 2 N-linked (GlcNAc...) asparagine glycosylation sites follow: Asn457 and Asn475.

Belongs to the sulfotransferase 1 family. Gal/GlcNAc/GalNAc subfamily. As to quaternary structure, homodimer; disulfide-linked. Homodimerization is not essential for enzyme activity. In terms of processing, glycosylation at Asn-475 is required for catalytic activity. Widely expressed. Highly expressed in bone marrow, peripheral blood leukocytes, spleen, brain, spinal cord, ovary and placenta. Expressed by high endothelial cells (HEVs) and leukocytes.

Its subcellular location is the golgi apparatus. The protein localises to the trans-Golgi network membrane. It carries out the reaction 3-O-{N-acetyl-beta-D-glucosaminyl-(1-&gt;3)-beta-D-galactosyl-(1-&gt;3)-N-acetyl-alpha-D-galactosaminyl}-L-threonyl-[protein] + 3'-phosphoadenylyl sulfate = 3-O-{6-O-sulfo-N-acetyl-beta-D-glucosaminyl-(1-&gt;3)-beta-D-galactosyl-(1-&gt;3)-N-acetyl-alpha-D-galactosaminyl}-L-threonyl-[protein] + adenosine 3',5'-bisphosphate + H(+). The enzyme catalyses 3-O-{N-acetyl-beta-D-glucosaminyl-(1-&gt;3)-beta-D-galactosyl-(1-&gt;3)-N-acetyl-alpha-D-galactosaminyl}-L-seryl-[protein] + 3'-phosphoadenylyl sulfate = 3-O-{6-O-sulfo-N-acetyl-beta-D-glucosaminyl-(1-&gt;3)-beta-D-galactosyl-(1-&gt;3)-N-acetyl-alpha-D-galactosaminyl}-L-seryl-[protein] + adenosine 3',5'-bisphosphate + H(+). It catalyses the reaction a 3-O-{beta-D-galactosyl-(1-&gt;3)-[N-acetyl-beta-D-glucosaminyl-(1-&gt;6)]-N-acetyl-alpha-D-galactosaminyl}-L-threonyl-[protein] + 3'-phosphoadenylyl sulfate = 3-O-{beta-D-galactosyl-(1-&gt;3)-[6-O-sulfo-N-acetyl-beta-D-glucosaminyl-(1-&gt;6)]-N-acetyl-alpha-D-galactosaminyl}-L-threonyl-[protein] + adenosine 3',5'-bisphosphate + H(+). The catalysed reaction is 3-O-{beta-D-galactosyl-(1-&gt;3)-[N-acetyl-beta-D-glucosaminyl-(1-&gt;6)]-N-acetyl-alpha-D-galactosaminyl}-L-seryl-[protein] + 3'-phosphoadenylyl sulfate = 3-O-{beta-D-galactosyl-(1-&gt;3)-[6-O-sulfo-N-acetyl-beta-D-glucosaminyl-(1-&gt;6)]-N-acetyl-alpha-D-galactosaminyl}-L-seryl-[protein] + adenosine 3',5'-bisphosphate + H(+). It functions in the pathway protein modification; carbohydrate sulfation. Functionally, sulfotransferase that utilizes 3'-phospho-5'-adenylyl sulfate (PAPS) as sulfonate donor to catalyze the transfer of sulfate to position 6 of non-reducing N-acetylglucosamine (GlcNAc) residues within keratan-like structures on N-linked glycans and within mucin-associated glycans that can ultimately serve as SELL ligands. SELL ligands are present in high endothelial cells (HEVs) and play a central role in lymphocyte homing at sites of inflammation. Participates in biosynthesis of the SELL ligand sialyl 6-sulfo Lewis X and in lymphocyte homing to Peyer patches. Has no activity toward O-linked sugars. Its substrate specificity may be influenced by its subcellular location. Sulfates GlcNAc residues at terminal, non-reducing ends of oligosaccharide chains. This chain is Carbohydrate sulfotransferase 2 (CHST2), found in Homo sapiens (Human).